The sequence spans 224 residues: Glycerol-3-phosphate acyltransferase (224 aa).

The next 5 helical transmembrane spans lie at 14-34, 64-84, 98-118, 127-147, and 160-180; these read FFPLAATLLGYLIGSLSFAVI, TAAIVTLLLDAAKGWLPVMLV, MALVGLAAFIGHLYPVFFNFA, LGVLLGLSPILALATGATWLI, and LTAAVFVPVYYVFGDGMAWYL.

It belongs to the PlsY family. Probably interacts with PlsX.

It localises to the cell inner membrane. It catalyses the reaction an acyl phosphate + sn-glycerol 3-phosphate = a 1-acyl-sn-glycero-3-phosphate + phosphate. The protein operates within lipid metabolism; phospholipid metabolism. Catalyzes the transfer of an acyl group from acyl-phosphate (acyl-PO(4)) to glycerol-3-phosphate (G3P) to form lysophosphatidic acid (LPA). This enzyme utilizes acyl-phosphate as fatty acyl donor, but not acyl-CoA or acyl-ACP. This is Glycerol-3-phosphate acyltransferase from Albidiferax ferrireducens (strain ATCC BAA-621 / DSM 15236 / T118) (Rhodoferax ferrireducens).